A 504-amino-acid polypeptide reads, in one-letter code: Myocilin (504 aa).

The first 32 residues, methionine 1–alanine 32, serve as a signal peptide directing secretion. The N-linked (GlcNAc...) asparagine glycan is linked to asparagine 57. The stretch at leucine 74–glutamine 184 forms a coiled coil. Disordered stretches follow at residues glutamine 106–leucine 131 and leucine 170–arginine 200. The span at glycine 122–leucine 131 shows a compositional bias: basic and acidic residues. The Olfactomedin-like domain occupies glycine 244–lysine 503. Cysteine 245 and cysteine 433 are disulfide-bonded. Ca(2+) contacts are provided by aspartate 380, asparagine 428, alanine 429, isoleucine 477, and aspartate 478. The Microbody targeting signal motif lies at serine 502–methionine 504.

As to quaternary structure, homodimer (via N-terminus). Can also form higher oligomers. Interacts with OLFM3, FN1, NRCAM, GLDN and NFASC. Interacts (via N-terminus) with MYL2. Interacts with SFRP1, FRZB, FZD7, FZD10, FZD1 and WIF1; regulates Wnt signaling. Interacts with SNTA1; regulates muscle hypertrophy. Interacts with ERBB2 and ERBB3; activates ERBB2-ERBB3 signaling pathway. Interacts with SNCG; affects its secretion and its aggregation. Post-translationally, different isoforms may arise by post-translational modifications. In terms of processing, glycosylated. Palmitoylated. Post-translationally, undergoes a calcium-dependent proteolytic cleavage at Arg-226 by CAPN2 in the endoplasmic reticulum. The result is the production of two fragments, one of 35 kDa containing the C-terminal olfactomedin-like domain, and another of 20 kDa containing the N-terminal leucine zipper-like domain. As to expression, detected in aqueous humor. Detected in the eye (at protein level). Widely expressed. Highly expressed in various types of muscle, ciliary body, papillary sphincter, skeletal muscle, heart, and bone marrow-derived mesenchymal stem cells. Expressed predominantly in the retina. In normal eyes, found in the inner uveal meshwork region and the anterior portion of the meshwork. In contrast, in many glaucomatous eyes, it is found in more regions of the meshwork and seems to be expressed at higher levels than in normal eyes, regardless of the type or clinical severity of glaucoma. The myocilin 35 kDa fragment is detected in aqueous humor and to a lesser extent in iris and ciliary body.

It is found in the secreted. Its subcellular location is the golgi apparatus. It localises to the cytoplasmic vesicle. The protein localises to the extracellular space. The protein resides in the extracellular matrix. It is found in the extracellular exosome. Its subcellular location is the mitochondrion. It localises to the mitochondrion intermembrane space. The protein localises to the mitochondrion inner membrane. The protein resides in the mitochondrion outer membrane. It is found in the rough endoplasmic reticulum. Its subcellular location is the cell projection. It localises to the cilium. The protein localises to the endoplasmic reticulum. In terms of biological role, secreted glycoprotein regulating the activation of different signaling pathways in adjacent cells to control different processes including cell adhesion, cell-matrix adhesion, cytoskeleton organization and cell migration. Promotes substrate adhesion, spreading and formation of focal contacts. Negatively regulates cell-matrix adhesion and stress fiber assembly through Rho protein signal transduction. Modulates the organization of actin cytoskeleton by stimulating the formation of stress fibers through interactions with components of Wnt signaling pathways. Promotes cell migration through activation of PTK2 and the downstream phosphatidylinositol 3-kinase signaling. Plays a role in bone formation and promotes osteoblast differentiation in a dose-dependent manner through mitogen-activated protein kinase signaling. Mediates myelination in the peripheral nervous system through ERBB2/ERBB3 signaling. Plays a role as a regulator of muscle hypertrophy through the components of dystrophin-associated protein complex. Involved in positive regulation of mitochondrial depolarization. Plays a role in neurite outgrowth. May participate in the obstruction of fluid outflow in the trabecular meshwork. This is Myocilin (MYOC) from Homo sapiens (Human).